We begin with the raw amino-acid sequence, 500 residues long: Na(+)/H(+) antiporter NhaB (500 aa).

A run of 12 helical transmembrane segments spans residues phenylalanine 28–isoleucine 50, methionine 58–leucine 78, valine 96–phenylalanine 116, alanine 129–leucine 149, threonine 150–alanine 170, leucine 205–proline 225, phenylalanine 241–leucine 261, isoleucine 311–isoleucine 331, phenylalanine 350–isoleucine 370, methionine 394–isoleucine 414, valine 449–leucine 469, and methionine 477–serine 497.

This sequence belongs to the NhaB Na(+)/H(+) (TC 2.A.34) antiporter family.

It is found in the cell inner membrane. It catalyses the reaction 2 Na(+)(in) + 3 H(+)(out) = 2 Na(+)(out) + 3 H(+)(in). Its function is as follows. Na(+)/H(+) antiporter that extrudes sodium in exchange for external protons. In Pseudomonas fluorescens (strain Pf0-1), this protein is Na(+)/H(+) antiporter NhaB.